Reading from the N-terminus, the 240-residue chain is 4-hydroxy-tetrahydrodipicolinate reductase (240 aa).

Residues 79 to 81 (ATT) and 103 to 106 (SANM) contribute to the NAD(+) site. Histidine 135 serves as the catalytic Proton donor/acceptor. (S)-2,3,4,5-tetrahydrodipicolinate is bound at residue histidine 136. Lysine 139 functions as the Proton donor in the catalytic mechanism. 145-146 (GT) provides a ligand contact to (S)-2,3,4,5-tetrahydrodipicolinate.

This sequence belongs to the DapB family.

It is found in the cytoplasm. The enzyme catalyses (S)-2,3,4,5-tetrahydrodipicolinate + NAD(+) + H2O = (2S,4S)-4-hydroxy-2,3,4,5-tetrahydrodipicolinate + NADH + H(+). It carries out the reaction (S)-2,3,4,5-tetrahydrodipicolinate + NADP(+) + H2O = (2S,4S)-4-hydroxy-2,3,4,5-tetrahydrodipicolinate + NADPH + H(+). Its pathway is amino-acid biosynthesis; L-lysine biosynthesis via DAP pathway; (S)-tetrahydrodipicolinate from L-aspartate: step 4/4. Catalyzes the conversion of 4-hydroxy-tetrahydrodipicolinate (HTPA) to tetrahydrodipicolinate. The chain is 4-hydroxy-tetrahydrodipicolinate reductase from Staphylococcus aureus (strain bovine RF122 / ET3-1).